The sequence spans 230 residues: Cytidylate kinase (230 aa).

Position 12–20 (12–20 (GPSGAGKGT)) interacts with ATP.

This sequence belongs to the cytidylate kinase family. Type 1 subfamily.

The protein localises to the cytoplasm. It catalyses the reaction CMP + ATP = CDP + ADP. It carries out the reaction dCMP + ATP = dCDP + ADP. The chain is Cytidylate kinase from Shewanella sp. (strain MR-7).